We begin with the raw amino-acid sequence, 192 residues long: Small ribosomal subunit protein eS7 (192 aa).

It belongs to the eukaryotic ribosomal protein eS7 family.

In Anopheles gambiae (African malaria mosquito), this protein is Small ribosomal subunit protein eS7 (RpS7).